Consider the following 738-residue polypeptide: Dipeptidyl peptidase 3 (738 aa).

The residue at position 2 (Ala-2) is an N-acetylalanine. His-450 serves as a coordination point for Zn(2+). Residue Glu-451 is part of the active site. Zn(2+)-binding residues include His-455 and Glu-508.

The protein belongs to the peptidase M49 family. Zn(2+) is required as a cofactor.

The protein localises to the cytoplasm. Its subcellular location is the cytosol. The enzyme catalyses Release of an N-terminal dipeptide from a peptide comprising four or more residues, with broad specificity. Also acts on dipeptidyl 2-naphthylamides.. In terms of biological role, cleaves and degrades bioactive peptides, including angiotensin, Leu-enkephalin and Met-enkephalin. Also cleaves Arg-Arg-beta-naphthylamide (in vitro). The sequence is that of Dipeptidyl peptidase 3 (Dpp3) from Mus musculus (Mouse).